A 616-amino-acid polypeptide reads, in one-letter code: Coagulation factor XII (616 aa).

Positions 1 to 19 (MRALLLLGILLVSLESALL) are cleaved as a signal peptide. In terms of domain architecture, Fibronectin type-II spans 42 to 90 (VTGEPCHFPFQYYRQLYYKCIQRGQRGPRPWCATTPNFEKDQRWAYCLE). 13 cysteine pairs are disulfide-bonded: C47–C73, C61–C88, C98–C110, C104–C119, C121–C130, C135–C163, C161–C170, C178–C189, C183–C198, C200–C209, C217–C295, C238–C277, and C266–C290. The EGF-like 1 domain maps to 94–131 (VKDHCNKGNPCQKGGTCVNMPNGPHCICPDHFTGKHCQ). Residue T109 is glycosylated (O-linked (Fuc) threonine). One can recognise a Fibronectin type-I domain in the interval 133–173 (EKCFEPQFLQFFQENEIWHRFEPAGVSKCQCKGPKAQCKPV). The EGF-like 2 domain occupies 174-210 (ASQVCSTNPCLNGGSCLQTEGHRLCRCPTGYAGRLCD). The 80-residue stretch at 216-295 (RCYSDRGLSY…SWQYCRLARC (80 aa)) folds into the Kringle domain. 3 N-linked (GlcNAc...) asparagine glycosylation sites follow: N249, N271, and N335. The tract at residues 303–342 (PPILTPTQSPSEHQDSPLLSREPQPTTQTPSQNLTSAWCA) is disordered. A compositionally biased stretch (polar residues) spans 325-338 (PQPTTQTPSQNLTS). Disulfide bonds link C358–C485, C396–C412, C404–C474, C435–C438, C501–C570, C533–C549, and C560–C591. The 244-residue stretch at 372–615 (IVGGLVALPG…YLAWIQEHTT (244 aa)) folds into the Peptidase S1 domain. The active-site Charge relay system is the H411. N-linked (GlcNAc...) asparagine glycosylation occurs at N432. Residue D460 is the Charge relay system of the active site. The Charge relay system role is filled by S564.

It belongs to the peptidase S1 family. Interacts with HRG; the interaction, which is enhanced in the presence of zinc ions and inhibited by heparin-binding, inhibits factor XII autoactivation and contact-initiated coagulation. O- and N-glycosylated.

The protein localises to the secreted. It catalyses the reaction Selective cleavage of Arg-|-Ile bonds in factor VII to form factor VIIa and factor XI to form factor XIa.. Activity is promoted in the presence of negatively charged surfaces. Factor XII is a serum glycoprotein that participates in the initiation of blood coagulation, fibrinolysis, and the generation of bradykinin and angiotensin. Prekallikrein is cleaved by factor XII to form kallikrein, which then cleaves factor XII first to alpha-factor XIIa and then trypsin cleaves it to beta-factor XIIa. Alpha-factor XIIa activates factor XI to factor XIa. The polypeptide is Coagulation factor XII (F12) (Sus scrofa (Pig)).